Here is a 2664-residue protein sequence, read N- to C-terminus: Non-reducing polyketide synthase sorB (2664 aa).

The interval 21–45 is disordered; the sequence is KSAPQSGNTADDIPNAASQPDTTST. Positions 36 to 45 are enriched in polar residues; sequence AASQPDTTST. Positions 112-281 are N-terminal acylcarrier protein transacylase domain (SAT); it reads ADHARRLAEW…TTPSRIASDL (170 aa). Cysteine 184 serves as the catalytic Nucleophile; for transacylase activity. The active-site Proton donor/acceptor; for transacylase activity is the histidine 302. A Ketosynthase family 3 (KS3) domain is found at 428–849; sequence DNDIAVIGMS…GSNASMVIKQ (422 aa). Active-site for beta-ketoacyl synthase activity residues include cysteine 596, histidine 731, and histidine 772. The tract at residues 961 to 1276 is malonyl-CoA:ACP transacylase (MAT) domain; sequence CFGGQVSKSV…TQGTRQLADV (316 aa). The interval 1345–1477 is N-terminal hotdog fold; it reads PGLYTFMGYG…GQLEFHRADD (133 aa). In terms of domain architecture, PKS/mFAS DH spans 1345 to 1663; sequence PGLYTFMGYG…FSARSMSELF (319 aa). The interval 1376–1548 is product template (PT) domain; it reads VSGYTLGKTV…PSESAGRAVK (173 aa). Positions 1507–1663 are C-terminal hotdog fold; it reads DEVIQGQSIY…FSARSMSELF (157 aa). In terms of domain architecture, Carrier spans 1711-1785; the sequence is TELWAKLLPV…GILAFLQSTL (75 aa). Serine 1745 is subject to O-(pantetheine 4'-phosphoryl)serine. A disordered region spans residues 1789–1820; that stretch reads GEDDASQSSDAASSSRNTPPSSNDGILATPSP. Residues 1794–1803 show a composition bias toward low complexity; that stretch reads SQSSDAASSS. The tract at residues 2015–2197 is methyltransferase domain; the sequence is FQLMADFLSR…DAGYKHVEWT (183 aa). An NADPH-binding (R) domain region spans residues 2281-2526; that stretch reads VTGTTGSLGS…TLRSFPAVEG (246 aa).

It depends on pantetheine 4'-phosphate as a cofactor.

It functions in the pathway secondary metabolite biosynthesis. Functionally, non-reducing polyketide synthase; part of the gene cluster that mediates the biosynthesis of sorbicillinoids, a diverse group of yellow secondary metabolites that restrict growth of competing pathogenic fungi but not of bacteria. Sorbicillinoids biosynthesis requires the action of two PKSs. SorA iteratively combines three acetyl units and the growing chain is modified by the ketoacyl reductase subunit, and optional by the enoyl reductase subunit in the second cycle. The polyketide is then handed over to the PKS SorB, which adds three more acetyl units, and two methyl groups. SorB releases an aldehyde, which undergoes spontaneous cyclization resulting in the formation of sorbicillin or 2',3'-dihydrosorbicillin. The monooxygenase sorC oxidizes sorbicillin and 2',3'-dihydrosorbicillin to 2',3'-dihydrosorbicillinol and sorbicillinol, respectively. The oxidoreductase sorD further converts sorbicillinol into oxosorbicillinol. Sorbicillinol is the building block for the other sorbicillinoids such as disorbicillinol, bisvertinolon, and dihydrobisvertinolone. The sequence is that of Non-reducing polyketide synthase sorB from Penicillium rubens (strain ATCC 28089 / DSM 1075 / NRRL 1951 / Wisconsin 54-1255) (Penicillium chrysogenum).